The following is a 261-amino-acid chain: MIYKCPMCREFFSERADLFMHQKVHTAEKPHKCDKCDKGFFHISELHIHWRDHTGEKVYKCDDCGKDFSTTTKLNRHKKIHTVEKPYKCYECGKAFNWSPHLQIHMRVHTGEKPYVCSECGRGFSNSSNLCMHQRVHTGEKPFKCEECGKAFRHTSSLCMHQRVHTGEKPYKCYECGKAFSQSSSLCIHQRVHTGEKPYRCCGCGKAFSQSSSLCIHQRVHTGEKPFKCDECGKAFSQSTSLCIHQRVHTKERNHLKISVI.

9 consecutive C2H2-type zinc fingers follow at residues 3–25 (YKCP…QKVH), 31–53 (HKCD…WRDH), 59–81 (YKCD…KKIH), 87–109 (YKCY…MRVH), 115–137 (YVCS…QRVH), 143–165 (FKCE…QRVH), 171–193 (YKCY…QRVH), 199–221 (YRCC…QRVH), and 227–249 (FKCD…QRVH). Residue Lys257 forms a Glycyl lysine isopeptide (Lys-Gly) (interchain with G-Cter in SUMO2) linkage.

Belongs to the krueppel C2H2-type zinc-finger protein family. In terms of tissue distribution, expressed in the organ of Corti, stria vascularis, auditory nerve and retina. Lower levels in the tongue, cerebellum, small intestine and kidney.

The protein resides in the nucleus. May be involved in transcriptional regulation. The protein is Zinc finger protein 664 (ZNF664) of Cavia porcellus (Guinea pig).